A 206-amino-acid polypeptide reads, in one-letter code: ATP-dependent Clp protease proteolytic subunit 1 (206 aa).

Ser103 acts as the Nucleophile in catalysis. The active site involves His128.

Belongs to the peptidase S14 family. Fourteen ClpP subunits assemble into 2 heptameric rings which stack back to back to give a disk-like structure with a central cavity, resembling the structure of eukaryotic proteasomes.

Its subcellular location is the cytoplasm. The enzyme catalyses Hydrolysis of proteins to small peptides in the presence of ATP and magnesium. alpha-casein is the usual test substrate. In the absence of ATP, only oligopeptides shorter than five residues are hydrolyzed (such as succinyl-Leu-Tyr-|-NHMec, and Leu-Tyr-Leu-|-Tyr-Trp, in which cleavage of the -Tyr-|-Leu- and -Tyr-|-Trp bonds also occurs).. Cleaves peptides in various proteins in a process that requires ATP hydrolysis. Has a chymotrypsin-like activity. Plays a major role in the degradation of misfolded proteins. The protein is ATP-dependent Clp protease proteolytic subunit 1 of Protochlamydia amoebophila (strain UWE25).